We begin with the raw amino-acid sequence, 572 residues long: Sulfite reductase [NADPH] hemoprotein beta-component (572 aa).

Residues Cys437, Cys443, Cys482, and Cys486 each coordinate [4Fe-4S] cluster. A siroheme-binding site is contributed by Cys486.

The protein belongs to the nitrite and sulfite reductase 4Fe-4S domain family. Alpha(8)-beta(8). The alpha component is a flavoprotein, the beta component is a hemoprotein. Requires siroheme as cofactor. The cofactor is [4Fe-4S] cluster.

The catalysed reaction is hydrogen sulfide + 3 NADP(+) + 3 H2O = sulfite + 3 NADPH + 4 H(+). It participates in sulfur metabolism; hydrogen sulfide biosynthesis; hydrogen sulfide from sulfite (NADPH route): step 1/1. Component of the sulfite reductase complex that catalyzes the 6-electron reduction of sulfite to sulfide. This is one of several activities required for the biosynthesis of L-cysteine from sulfate. The polypeptide is Sulfite reductase [NADPH] hemoprotein beta-component (Lysinibacillus sphaericus (strain C3-41)).